A 343-amino-acid polypeptide reads, in one-letter code: Mitochondrial import inner membrane translocase subunit TIM50-A (343 aa).

Over 1 to 57 (MHKIVWFGTLNKSIGYIGKKKTCLLSPCEKICLNSARKTVQRCDKNYSPPKLRRIKN) the chain is Mitochondrial matrix. Residues 58–77 (FYTYSVVLGSLFSIVMWAIY) traverse the membrane as a helical segment. Over 78-343 (KLGKPEEDHR…GRSLRGSSIK (266 aa)) the chain is Mitochondrial intermembrane. Positions 135 to 278 (YIQPPYSLVL…FDLTAFLQLI (144 aa)) constitute an FCP1 homology domain.

This sequence belongs to the TIM50 family. In terms of assembly, component of the TIM23 complex at least composed of Tim23, Tim17 (Tim17a1, Tim17a2 or Tim17b1) and a Tim50. In terms of tissue distribution, exclusively expressed in the testis.

The protein resides in the mitochondrion inner membrane. Its function is as follows. Essential component of the TIM23 complex, a complex that mediates the translocation of transit peptide-containing proteins across the mitochondrial inner membrane. This is Mitochondrial import inner membrane translocase subunit TIM50-A (ttm3) from Drosophila melanogaster (Fruit fly).